We begin with the raw amino-acid sequence, 396 residues long: Ribosomal RNA large subunit methyltransferase I (396 aa).

The PUA domain occupies 2 to 81; that stretch reads TVRLILAKGR…ESIDIDFFVR (80 aa).

This sequence belongs to the methyltransferase superfamily. RlmI family.

It is found in the cytoplasm. It catalyses the reaction cytidine(1962) in 23S rRNA + S-adenosyl-L-methionine = 5-methylcytidine(1962) in 23S rRNA + S-adenosyl-L-homocysteine + H(+). Its function is as follows. Specifically methylates the cytosine at position 1962 (m5C1962) of 23S rRNA. In Erwinia tasmaniensis (strain DSM 17950 / CFBP 7177 / CIP 109463 / NCPPB 4357 / Et1/99), this protein is Ribosomal RNA large subunit methyltransferase I.